The following is a 499-amino-acid chain: Long chain base biosynthesis protein 2b (499 aa).

Residues 5 to 25 (VPYVTAATTLFSFGLIFGFGH) traverse the membrane as a helical segment. An N6-(pyridoxal phosphate)lysine modification is found at Lys322.

The protein belongs to the class-II pyridoxal-phosphate-dependent aminotransferase family. As to quaternary structure, heterodimer with LCB1. Component of the serine palmitoyltransferase (SPT) complex, composed of LCB1 and LCB2. Pyridoxal 5'-phosphate is required as a cofactor.

It is found in the endoplasmic reticulum membrane. The catalysed reaction is L-serine + hexadecanoyl-CoA + H(+) = 3-oxosphinganine + CO2 + CoA. Its pathway is lipid metabolism; sphingolipid metabolism. In terms of biological role, serine palmitoyltransferase (SPT). The heterodimer formed with LCB1 constitutes the catalytic core. The chain is Long chain base biosynthesis protein 2b from Oryza sativa subsp. japonica (Rice).